Reading from the N-terminus, the 473-residue chain is Calcium/calmodulin-dependent protein kinase type IV (473 aa).

Phosphoserine; by autocatalysis occurs at positions 12 and 13. The region spanning 46–300 is the Protein kinase domain; the sequence is FEVESELGRG…TFQALQHPWV (255 aa). ATP is bound by residues 52–60 and Lys-75; that span reads LGRGATSIV. Residue Thr-57 is glycosylated (O-linked (GlcNAc) threonine). O-linked (GlcNAc) serine glycosylation occurs at Ser-58. O-linked (GlcNAc) serine glycosylation occurs at Ser-137. Asp-164 acts as the Proton acceptor in catalysis. The O-linked (GlcNAc) serine glycan is linked to Ser-189. At Thr-200 the chain carries Phosphothreonine; by CaMKK1 and CaMKK2. The tract at residues 305 to 321 is autoinhibitory domain; the sequence is ANFVHMDTAQKKLQEFN. The PP2A-binding stretch occupies residues 306–323; the sequence is NFVHMDTAQKKLQEFNAR. Residues 322-341 are calmodulin-binding; sequence ARRKLKAAVKAVVASSRLGS. At Ser-336 the chain carries Phosphoserine; by autocatalysis. The residue at position 341 (Ser-341) is a Phosphoserine. Over residues 341-350 the composition is skewed to low complexity; it reads SASSSHGSIQ. Disordered regions lie at residues 341 to 368 and 445 to 473; these read SASSSHGSIQESHKASRDPSPIQDGNED and EEAAAPREGQGSSAVGFEVPQQDVILPEY. Ser-344, Ser-345, and Ser-356 each carry an O-linked (GlcNAc) serine glycan. Residue Ser-360 is modified to Phosphoserine.

This sequence belongs to the protein kinase superfamily. CAMK Ser/Thr protein kinase family. CaMK subfamily. In terms of assembly, monomer. Interacts with protein phosphatase 2A (PPP2CA/PPP2CB); the interaction is mutually exclusive with binding to Ca(2+)/calmodulin. Phosphorylated by CaMKK1 and CaMKK2 on Thr-200. Dephosphorylated by protein phosphatase 2A. Autophosphorylated on Ser-12 and Ser-13. In terms of processing, glycosylation at Ser-189 modulates the phosphorylation of CaMK4 at Thr-200 and negatively regulates its activity toward CREB1 in basal conditions and during early inomycin stimulation. Expressed in brain, thymus, CD4 T-cells, testis and epithelial ovarian cancer tissue.

Its subcellular location is the cytoplasm. The protein localises to the nucleus. It catalyses the reaction L-seryl-[protein] + ATP = O-phospho-L-seryl-[protein] + ADP + H(+). The catalysed reaction is L-threonyl-[protein] + ATP = O-phospho-L-threonyl-[protein] + ADP + H(+). Its activity is regulated as follows. Activated by Ca(2+)/calmodulin. Binding of calmodulin results in conformational change that relieves intrasteric autoinhibition and allows phosphorylation of Thr-200 within the activation loop by CaMKK1 or CaMKK2. Phosphorylation of Thr-200 results in a 10-20-fold increase in total activity to generate Ca(2+)/calmodulin-independent activity. Autophosphorylation of the N-terminus Ser-12 and Ser-13 is required for full activation. Inactivated by protein phosphatase 2A (PPP2CA/PPP2CB) which dephosphorylates Thr-200, thereby terminating autonomous activity and helping to maintain the enzyme in its autoinhibited state. Its function is as follows. Calcium/calmodulin-dependent protein kinase that operates in the calcium-triggered CaMKK-CaMK4 signaling cascade and regulates, mainly by phosphorylation, the activity of several transcription activators, such as CREB1, MEF2D, JUN and RORA, which play pivotal roles in immune response, inflammation, and memory consolidation. In the thymus, regulates the CD4(+)/CD8(+) double positive thymocytes selection threshold during T-cell ontogeny. In CD4 memory T-cells, is required to link T-cell antigen receptor (TCR) signaling to the production of IL2, IFNG and IL4 (through the regulation of CREB and MEF2). Regulates the differentiation and survival phases of osteoclasts and dendritic cells (DCs). Mediates DCs survival by linking TLR4 and the regulation of temporal expression of BCL2. Phosphorylates the transcription activator CREB1 on 'Ser-133' in hippocampal neuron nuclei and contribute to memory consolidation and long term potentiation (LTP) in the hippocampus. Can activate the MAP kinases MAPK1/ERK2, MAPK8/JNK1 and MAPK14/p38 and stimulate transcription through the phosphorylation of ELK1 and ATF2. Can also phosphorylate in vitro CREBBP, PRM2, MEF2A and STMN1/OP18. The chain is Calcium/calmodulin-dependent protein kinase type IV (CAMK4) from Homo sapiens (Human).